We begin with the raw amino-acid sequence, 210 residues long: 3,4-dihydroxy-2-butanone 4-phosphate synthase (210 aa).

D-ribulose 5-phosphate contacts are provided by residues Arg-33–Glu-34, Asp-38, Arg-146–Thr-150, and Glu-170. A Mg(2+)-binding site is contributed by Glu-34. His-149 provides a ligand contact to Mg(2+).

It belongs to the DHBP synthase family. Homodimer. Requires Mg(2+) as cofactor. Mn(2+) is required as a cofactor.

It catalyses the reaction D-ribulose 5-phosphate = (2S)-2-hydroxy-3-oxobutyl phosphate + formate + H(+). The protein operates within cofactor biosynthesis; riboflavin biosynthesis; 2-hydroxy-3-oxobutyl phosphate from D-ribulose 5-phosphate: step 1/1. Functionally, catalyzes the conversion of D-ribulose 5-phosphate to formate and 3,4-dihydroxy-2-butanone 4-phosphate. This is 3,4-dihydroxy-2-butanone 4-phosphate synthase from Chromobacterium violaceum (strain ATCC 12472 / DSM 30191 / JCM 1249 / CCUG 213 / NBRC 12614 / NCIMB 9131 / NCTC 9757 / MK).